The sequence spans 133 residues: MVDAFAGTWKLVDSKNFDDYMKSIGVGFATRQVANMTKPTTIIEVNGDTIIIKTQSTFKSTEISFKLGVEFDETTADDRKVKSIVTLDGGKLVHLQKWNGQETTLVRELVDGKLILTLTHGSAVCTRTYEKEA.

The residue at position 2 (Val2) is an N-acetylvaline. Thr8 is modified (phosphothreonine). Tyr20 is modified (phosphotyrosine; by Tyr-kinases). Residue Ser23 is modified to Phosphoserine. Phosphothreonine is present on Thr30. Ser83 bears the Phosphoserine mark. Arg127–Tyr129 serves as a coordination point for (9Z)-octadecenoate. Arg127–Tyr129 lines the hexadecanoate pocket. Residue Arg127–Tyr129 coordinates octadecanoate.

Belongs to the calycin superfamily. Fatty-acid binding protein (FABP) family.

It localises to the cytoplasm. Its function is as follows. FABPs are thought to play a role in the intracellular transport of long-chain fatty acids and their acyl-CoA esters. This chain is Fatty acid-binding protein, heart (FABP3), found in Sus scrofa (Pig).